The sequence spans 149 residues: Probable flagellum biosynthesis repressor protein FlbT (149 aa).

This sequence belongs to the FlbT family.

Has a post-transcriptional repressor function in flagellum biogenesis. Associates with the 5'-UTR of fljK mRNA and promotes its degradation. In Rhizobium etli (strain ATCC 51251 / DSM 11541 / JCM 21823 / NBRC 15573 / CFN 42), this protein is Probable flagellum biosynthesis repressor protein FlbT.